A 408-amino-acid chain; its full sequence is Histidine--tRNA ligase (408 aa).

The protein belongs to the class-II aminoacyl-tRNA synthetase family. In terms of assembly, homodimer.

It localises to the cytoplasm. The catalysed reaction is tRNA(His) + L-histidine + ATP = L-histidyl-tRNA(His) + AMP + diphosphate + H(+). In Campylobacter concisus (strain 13826), this protein is Histidine--tRNA ligase.